We begin with the raw amino-acid sequence, 272 residues long: Protein FAM210A (272 aa).

The region spanning 117–229 is the DUF1279 domain; the sequence is DKSISLYQRF…GYMSTPPPVK (113 aa). A helical membrane pass occupies residues 136-156; the sequence is VLIPVHLITSGVWFGTFYYAA. The stretch at 229 to 271 forms a coiled coil; that stretch reads KEYLQDRMEETKELITEKMEETKDRLTEKLQETKEKVSFKKKV. Residues 246-272 are disordered; the sequence is KMEETKDRLTEKLQETKEKVSFKKKVE.

This sequence belongs to the FAM210 family. In terms of assembly, interacts with ATAD3A.

Its subcellular location is the membrane. The protein localises to the mitochondrion. It is found in the cytoplasm. Functionally, may play a role in the structure and strength of both muscle and bone. The protein is Protein FAM210A (FAM210A) of Pongo abelii (Sumatran orangutan).